The primary structure comprises 91 residues: Sec-independent protein translocase protein TatA (91 aa).

Residues Ala2–Trp22 traverse the membrane as a helical segment. Over residues Val43–Lys55 the composition is skewed to basic and acidic residues. The tract at residues Val43 to Ala91 is disordered. Residues Ser57–Val81 are compositionally biased toward polar residues. A compositionally biased stretch (basic and acidic residues) spans Glu82 to Ala91.

It belongs to the TatA/E family. The Tat system comprises two distinct complexes: a TatABC complex, containing multiple copies of TatA, TatB and TatC subunits, and a separate TatA complex, containing only TatA subunits. Substrates initially bind to the TatABC complex, which probably triggers association of the separate TatA complex to form the active translocon.

Its subcellular location is the cell membrane. Functionally, part of the twin-arginine translocation (Tat) system that transports large folded proteins containing a characteristic twin-arginine motif in their signal peptide across membranes. TatA could form the protein-conducting channel of the Tat system. The sequence is that of Sec-independent protein translocase protein TatA from Corynebacterium kroppenstedtii (strain DSM 44385 / JCM 11950 / CIP 105744 / CCUG 35717).